A 616-amino-acid polypeptide reads, in one-letter code: Putative L-type lectin-domain containing receptor kinase I.10 (616 aa).

Residues 1-22 form the signal peptide; it reads MAWGLFQILMISFFHLIKLSSQ. Topologically, residues 23–288 are extracellular; sequence QETSFVYETF…RAEHKNLSPL (266 aa). Residues 24-258 are legume-lectin like; the sequence is ETSFVYETFR…YQYVLSWSFS (235 aa). Asn-56, Asn-124, Asn-181, Asn-204, and Asn-225 each carry an N-linked (GlcNAc...) asparagine glycan. Residues 289–309 traverse the membrane as a helical segment; that stretch reads FIDLLGFLAIMGLCTLTGMYF. Over 310 to 616 the chain is Cytoplasmic; sequence FKRGKYAEIT…SAASSATNSP (307 aa). In terms of domain architecture, Protein kinase spans 343–616; it reads FHKDGFLGKG…SAASSATNSP (274 aa). Residues 349–357 and Lys-371 contribute to the ATP site; that span reads LGKGGFGEV. Catalysis depends on Asp-467, which acts as the Proton acceptor.

It in the C-terminal section; belongs to the protein kinase superfamily. Ser/Thr protein kinase family. This sequence in the N-terminal section; belongs to the leguminous lectin family.

The protein localises to the cell membrane. It carries out the reaction L-seryl-[protein] + ATP = O-phospho-L-seryl-[protein] + ADP + H(+). The enzyme catalyses L-threonyl-[protein] + ATP = O-phospho-L-threonyl-[protein] + ADP + H(+). The sequence is that of Putative L-type lectin-domain containing receptor kinase I.10 (LECRK110) from Arabidopsis thaliana (Mouse-ear cress).